The following is a 257-amino-acid chain: 4-hydroxy-tetrahydrodipicolinate reductase (257 aa).

NAD(+) contacts are provided by residues 8-13 (GSTGRV), 90-92 (ATT), and 114-117 (ATNM). H146 acts as the Proton donor/acceptor in catalysis. H147 serves as a coordination point for (S)-2,3,4,5-tetrahydrodipicolinate. The active-site Proton donor is the K150. 156–157 (GT) provides a ligand contact to (S)-2,3,4,5-tetrahydrodipicolinate.

It belongs to the DapB family.

Its subcellular location is the cytoplasm. The catalysed reaction is (S)-2,3,4,5-tetrahydrodipicolinate + NAD(+) + H2O = (2S,4S)-4-hydroxy-2,3,4,5-tetrahydrodipicolinate + NADH + H(+). It carries out the reaction (S)-2,3,4,5-tetrahydrodipicolinate + NADP(+) + H2O = (2S,4S)-4-hydroxy-2,3,4,5-tetrahydrodipicolinate + NADPH + H(+). It functions in the pathway amino-acid biosynthesis; L-lysine biosynthesis via DAP pathway; (S)-tetrahydrodipicolinate from L-aspartate: step 4/4. Catalyzes the conversion of 4-hydroxy-tetrahydrodipicolinate (HTPA) to tetrahydrodipicolinate. The protein is 4-hydroxy-tetrahydrodipicolinate reductase of Aliarcobacter butzleri (strain RM4018) (Arcobacter butzleri).